Here is a 207-residue protein sequence, read N- to C-terminus: Small ribosomal subunit protein uS3c (207 aa).

The region spanning 39-109 is the KH type-2 domain; it reads IRDYIFTNLL…QLKINIIDVT (71 aa).

Belongs to the universal ribosomal protein uS3 family. As to quaternary structure, part of the 30S ribosomal subunit.

Its subcellular location is the plastid. It localises to the chloroplast. In Cyanidium caldarium (Red alga), this protein is Small ribosomal subunit protein uS3c (rps3).